We begin with the raw amino-acid sequence, 104 residues long: Circadian clock oscillator protein KaiB (104 aa).

Belongs to the KaiB family. The KaiABC complex composition changes during the circadian cycle to control KaiC phosphorylation. Complexes KaiC(6), KaiA(2-4):KaiC(6), KaiB(6):KaiC(6) and KaiC(6):KaiB(6):KaiA(12) are among the most important forms, many form cooperatively. Undergoes a major conformational rearrangment; in the free state forms homotetramers as a dimer of dimers. When bound to the CI domain of KaiC switches to a monomeric thioredoxin-fold (KaiB(fs)). KaiB(fs) binds CikA, leading it to dephosphorylate phospho-RpaA.

In terms of biological role, key component of the KaiABC oscillator complex, which constitutes the main circadian regulator in cyanobacteria. Complex composition changes during the circadian cycle to control KaiC phosphorylation. KaiA stimulates KaiC autophosphorylation, while KaiB sequesters KaiA, leading to KaiC autodephosphorylation. Phospho-Ser-431 KaiC accumulation triggers binding of KaiB to form the KaiB(6):KaiC(6) complex, leading to changes in output regulators CikA and SasA. KaiB switches to a thioredoxin-like fold (KaiB(fs)) when bound to KaiC. KaiB(6):KaiC(6) formation exposes a site for KaiA binding that sequesters KaiA from KaiC, making the KaiC(6):KaiB(6):KaiA(12) complex that results in KaiC autodephosphorylation. Functionally, a metamorphic protein which reversibly switches between an inactive tetrameric fold and a rare, thioredoxin-like monomeric fold (KaiB(fs)). KaiB(fs) binds phospho-KaiC, KaiA and CikA. KaiA and CikA compete for binding to KaiB(fs), and KaiB(fs) and SasA compete for binding to KaiC, thus the clock oscillator and output signal pathway are tightly coupled. In Rippkaea orientalis (strain PCC 8801 / RF-1) (Cyanothece sp. (strain PCC 8801)), this protein is Circadian clock oscillator protein KaiB.